Here is a 180-residue protein sequence, read N- to C-terminus: UPF0227 protein YcfP (180 aa).

This sequence belongs to the UPF0227 family.

This is UPF0227 protein YcfP from Salmonella gallinarum (strain 287/91 / NCTC 13346).